A 247-amino-acid chain; its full sequence is Adenosylcobinamide-GDP ribazoletransferase (247 aa).

Helical transmembrane passes span I34 to L54, C59 to F79, G113 to L133, V138 to Y158, and V194 to I214.

The protein belongs to the CobS family. Requires Mg(2+) as cofactor.

Its subcellular location is the cell inner membrane. It catalyses the reaction alpha-ribazole + adenosylcob(III)inamide-GDP = adenosylcob(III)alamin + GMP + H(+). The catalysed reaction is alpha-ribazole 5'-phosphate + adenosylcob(III)inamide-GDP = adenosylcob(III)alamin 5'-phosphate + GMP + H(+). It functions in the pathway cofactor biosynthesis; adenosylcobalamin biosynthesis; adenosylcobalamin from cob(II)yrinate a,c-diamide: step 7/7. Functionally, joins adenosylcobinamide-GDP and alpha-ribazole to generate adenosylcobalamin (Ado-cobalamin). Also synthesizes adenosylcobalamin 5'-phosphate from adenosylcobinamide-GDP and alpha-ribazole 5'-phosphate. This Salmonella arizonae (strain ATCC BAA-731 / CDC346-86 / RSK2980) protein is Adenosylcobinamide-GDP ribazoletransferase.